The following is a 336-amino-acid chain: 4-hydroxythreonine-4-phosphate dehydrogenase (336 aa).

Residues His-142 and Thr-143 each coordinate substrate. The a divalent metal cation site is built by His-172, His-217, and His-274. Residues Lys-282, Asn-291, and Arg-300 each coordinate substrate.

This sequence belongs to the PdxA family. In terms of assembly, homodimer. Zn(2+) is required as a cofactor. The cofactor is Mg(2+). Co(2+) serves as cofactor.

The protein localises to the cytoplasm. The catalysed reaction is 4-(phosphooxy)-L-threonine + NAD(+) = 3-amino-2-oxopropyl phosphate + CO2 + NADH. Its pathway is cofactor biosynthesis; pyridoxine 5'-phosphate biosynthesis; pyridoxine 5'-phosphate from D-erythrose 4-phosphate: step 4/5. Catalyzes the NAD(P)-dependent oxidation of 4-(phosphooxy)-L-threonine (HTP) into 2-amino-3-oxo-4-(phosphooxy)butyric acid which spontaneously decarboxylates to form 3-amino-2-oxopropyl phosphate (AHAP). The sequence is that of 4-hydroxythreonine-4-phosphate dehydrogenase from Trichlorobacter lovleyi (strain ATCC BAA-1151 / DSM 17278 / SZ) (Geobacter lovleyi).